The chain runs to 700 residues: Polyribonucleotide nucleotidyltransferase (700 aa).

Residues Asp485 and Asp491 each coordinate Mg(2+). Residues 552 to 611 (PRITTLKINPEKIRDVIGKGGATIRALTEETGTTIELEDDGTVKIASANGDATKEAIRRI) enclose the KH domain. In terms of domain architecture, S1 motif spans 621–689 (GTVYNGKVVR…RQGRVRLSMK (69 aa)).

Belongs to the polyribonucleotide nucleotidyltransferase family. As to quaternary structure, component of the RNA degradosome, which is a multiprotein complex involved in RNA processing and mRNA degradation. Mg(2+) is required as a cofactor.

It localises to the cytoplasm. The catalysed reaction is RNA(n+1) + phosphate = RNA(n) + a ribonucleoside 5'-diphosphate. In terms of biological role, involved in mRNA degradation. Catalyzes the phosphorolysis of single-stranded polyribonucleotides processively in the 3'- to 5'-direction. The protein is Polyribonucleotide nucleotidyltransferase of Shewanella loihica (strain ATCC BAA-1088 / PV-4).